The following is a 118-amino-acid chain: MARIAGVNIPDNKHAVISLTYIFGIGRHTAKNILAAVGITETTKIRELDDAQLDAIRAEVAKVPTEGDLRREISMNIKRLMDLGCYRGLRHRRSLPVRGQRTKTNARTRKGPRKPIKK.

Residues 92–118 (RRSLPVRGQRTKTNARTRKGPRKPIKK) form a disordered region.

The protein belongs to the universal ribosomal protein uS13 family. In terms of assembly, part of the 30S ribosomal subunit. Forms a loose heterodimer with protein S19. Forms two bridges to the 50S subunit in the 70S ribosome.

In terms of biological role, located at the top of the head of the 30S subunit, it contacts several helices of the 16S rRNA. In the 70S ribosome it contacts the 23S rRNA (bridge B1a) and protein L5 of the 50S subunit (bridge B1b), connecting the 2 subunits; these bridges are implicated in subunit movement. Contacts the tRNAs in the A and P-sites. This chain is Small ribosomal subunit protein uS13, found in Acinetobacter baumannii (strain AB307-0294).